A 112-amino-acid polypeptide reads, in one-letter code: Large ribosomal subunit protein bL17 (112 aa).

Belongs to the bacterial ribosomal protein bL17 family. As to quaternary structure, part of the 50S ribosomal subunit. Contacts protein L32.

In Desulforudis audaxviator (strain MP104C), this protein is Large ribosomal subunit protein bL17.